Consider the following 721-residue polypeptide: Mitogen-activated protein kinase 6 (721 aa).

In terms of domain architecture, Protein kinase spans 20–316; sequence YMDLKPLGCG…AEEALSHPYM (297 aa). Residues 26–34 and K49 each bind ATP; that span reads LGCGGNGLV. D152 (proton acceptor) is an active-site residue. The residue at position 626 (T626) is a Phosphothreonine. Residues 626–628 carry the TXY motif; the sequence is TSY. At Y628 the chain carries Phosphotyrosine.

Belongs to the protein kinase superfamily. CMGC Ser/Thr protein kinase family. MAP kinase subfamily. The cofactor is Mg(2+). In terms of processing, dually phosphorylated on Thr-626 and Tyr-628, which activates the enzyme.

The catalysed reaction is L-seryl-[protein] + ATP = O-phospho-L-seryl-[protein] + ADP + H(+). It carries out the reaction L-threonyl-[protein] + ATP = O-phospho-L-threonyl-[protein] + ADP + H(+). Its activity is regulated as follows. Activated by threonine and tyrosine phosphorylation. In terms of biological role, phosphorylates microtubule-associated protein 2 (MAP2). May promote entry in the cell cycle. This Gallus gallus (Chicken) protein is Mitogen-activated protein kinase 6 (MAPK6).